The sequence spans 179 residues: Lebocin-1/2 (179 aa).

The signal sequence occupies residues 1-16 (MYKFLVFSSVLVLFFA). Positions 17-120 (QASCQRFIQP…QPIESHRNTR (104 aa)) are excised as a propeptide. Residues 93-116 (NNEASIEHSHHTVDTGLDQPIESH) are disordered. Residue Thr135 is glycosylated (O-linked (GalNAc...) threonine). Residues 153–179 (RRHASDDQEELRQYNEHFLIPRDIFQE) constitute a propeptide that is removed on maturation.

The protein belongs to the lebocin family. Post-translationally, O-glycosylation is important for the antibacterial activity of lebocin, O-linked glycan structure is a disaccharide (Gal-GalNAc) in case of lebocin 1 and a monosaccharide (GalNAc) in case of lebocin 2. Hemolymph. Produced in fat body.

Its subcellular location is the secreted. In terms of biological role, antibacterial peptide. The polypeptide is Lebocin-1/2 (Bombyx mori (Silk moth)).